The primary structure comprises 403 residues: S-adenosylmethionine synthase (403 aa).

Position 22 (His22) interacts with ATP. A Mg(2+)-binding site is contributed by Asp24. Glu50 is a binding site for K(+). Glu63 and Gln107 together coordinate L-methionine. Positions 107–117 (QSPDIAMGVDK) are flexible loop. ATP is bound by residues 182-184 (DAK), 248-249 (RF), Asp257, 263-264 (RK), Ala280, and Lys284. Residue Asp257 coordinates L-methionine. Lys288 is an L-methionine binding site.

The protein belongs to the AdoMet synthase family. As to quaternary structure, homotetramer; dimer of dimers. Mg(2+) is required as a cofactor. It depends on K(+) as a cofactor.

The protein resides in the cytoplasm. It carries out the reaction L-methionine + ATP + H2O = S-adenosyl-L-methionine + phosphate + diphosphate. The protein operates within amino-acid biosynthesis; S-adenosyl-L-methionine biosynthesis; S-adenosyl-L-methionine from L-methionine: step 1/1. Functionally, catalyzes the formation of S-adenosylmethionine (AdoMet) from methionine and ATP. The overall synthetic reaction is composed of two sequential steps, AdoMet formation and the subsequent tripolyphosphate hydrolysis which occurs prior to release of AdoMet from the enzyme. In Chloroflexus aurantiacus (strain ATCC 29366 / DSM 635 / J-10-fl), this protein is S-adenosylmethionine synthase.